A 122-amino-acid chain; its full sequence is Large ribosomal subunit protein bL12 (122 aa).

Belongs to the bacterial ribosomal protein bL12 family. In terms of assembly, homodimer. Part of the ribosomal stalk of the 50S ribosomal subunit. Forms a multimeric L10(L12)X complex, where L10 forms an elongated spine to which 2 to 4 L12 dimers bind in a sequential fashion. Binds GTP-bound translation factors.

Its function is as follows. Forms part of the ribosomal stalk which helps the ribosome interact with GTP-bound translation factors. Is thus essential for accurate translation. The polypeptide is Large ribosomal subunit protein bL12 (Staphylococcus aureus (strain Newman)).